We begin with the raw amino-acid sequence, 161 residues long: Putative pre-16S rRNA nuclease (161 aa).

It belongs to the YqgF nuclease family.

The protein resides in the cytoplasm. Could be a nuclease involved in processing of the 5'-end of pre-16S rRNA. This Methylocella silvestris (strain DSM 15510 / CIP 108128 / LMG 27833 / NCIMB 13906 / BL2) protein is Putative pre-16S rRNA nuclease.